Here is a 299-residue protein sequence, read N- to C-terminus: Deoxyhypusine hydroxylase (299 aa).

HEAT-like PBS-type repeat units lie at residues 54–80 (LKHE…VLQD), 87–113 (VRHE…YSED), 174–200 (DRYR…GLRA), 205–231 (FRHE…ALRS), and 238–264 (VRHE…FAQD). H56, H89, and E90 together coordinate Fe cation. Fe cation contacts are provided by H207, H240, and E241.

Belongs to the deoxyhypusine hydroxylase family. Fe(2+) is required as a cofactor.

It catalyses the reaction [eIF5A protein]-deoxyhypusine + AH2 + O2 = [eIF5A protein]-hypusine + A + H2O. The protein operates within protein modification; eIF5A hypusination. Its function is as follows. Catalyzes the hydroxylation of the N(6)-(4-aminobutyl)-L-lysine intermediate produced by deoxyhypusine synthase/DHPS on a critical lysine of the eukaryotic translation initiation factor 5A/eIF-5A. This is the second step of the post-translational modification of that lysine into an unusual amino acid residue named hypusine. Hypusination is unique to mature eIF-5A factor and is essential for its function. The chain is Deoxyhypusine hydroxylase from Gallus gallus (Chicken).